A 455-amino-acid polypeptide reads, in one-letter code: Adenylosuccinate synthetase isozyme 2 (455 aa).

The disordered stretch occupies residues 1 to 25; the sequence is MSDSGDAQPQDGGNSSSSRGKSPSV. The segment covering 12-25 has biased composition (low complexity); sequence GGNSSSSRGKSPSV. GTP contacts are provided by residues 38–44 and 66–68; these read GDEGKGK and GHT. Asp39 serves as the catalytic Proton acceptor. Mg(2+) contacts are provided by Asp39 and Gly66. Asp39 contacts substrate. Residues 39–42, 64–67, Thr161, Arg175, Asn254, Thr269, and Arg333 contribute to the IMP site; these read DEGK and NAGH. His67 acts as the Proton donor in catalysis. Residue 329–335 participates in substrate binding; it reads VTTGRKR. GTP-binding positions include Arg335, 361–363, and 443–446; these read KLD and GVGK.

This sequence belongs to the adenylosuccinate synthetase family. Homodimer. The cofactor is Mg(2+).

Its subcellular location is the cytoplasm. It is found in the mitochondrion. The enzyme catalyses IMP + L-aspartate + GTP = N(6)-(1,2-dicarboxyethyl)-AMP + GDP + phosphate + 2 H(+). It participates in purine metabolism; AMP biosynthesis via de novo pathway; AMP from IMP: step 1/2. Inhibited competitively by AMP and IMP and non-competitively by fructose 1,6-bisphosphate. In terms of biological role, plays an important role in the de novo pathway and in the salvage pathway of purine nucleotide biosynthesis. Catalyzes the first committed step in the biosynthesis of AMP from IMP. The protein is Adenylosuccinate synthetase isozyme 2 (adss2) of Danio rerio (Zebrafish).